We begin with the raw amino-acid sequence, 442 residues long: UDP-N-acetylmuramoylalanine--D-glutamate ligase (442 aa).

Position 115–121 (Gly-115–Thr-121) interacts with ATP.

This sequence belongs to the MurCDEF family.

The protein resides in the cytoplasm. The catalysed reaction is UDP-N-acetyl-alpha-D-muramoyl-L-alanine + D-glutamate + ATP = UDP-N-acetyl-alpha-D-muramoyl-L-alanyl-D-glutamate + ADP + phosphate + H(+). The protein operates within cell wall biogenesis; peptidoglycan biosynthesis. Cell wall formation. Catalyzes the addition of glutamate to the nucleotide precursor UDP-N-acetylmuramoyl-L-alanine (UMA). This chain is UDP-N-acetylmuramoylalanine--D-glutamate ligase, found in Aliivibrio salmonicida (strain LFI1238) (Vibrio salmonicida (strain LFI1238)).